Consider the following 217-residue polypeptide: Octanoyltransferase (217 aa).

Residues 31–206 (KSVMDEAWLL…ELVSRLGYAE (176 aa)) enclose the BPL/LPL catalytic domain. Substrate is bound by residues 70–77 (RGGQVTYH), 137–139 (SLG), and 150–152 (GLA). The active-site Acyl-thioester intermediate is the cysteine 168.

Belongs to the LipB family.

The protein localises to the cytoplasm. It catalyses the reaction octanoyl-[ACP] + L-lysyl-[protein] = N(6)-octanoyl-L-lysyl-[protein] + holo-[ACP] + H(+). Its pathway is protein modification; protein lipoylation via endogenous pathway; protein N(6)-(lipoyl)lysine from octanoyl-[acyl-carrier-protein]: step 1/2. Catalyzes the transfer of endogenously produced octanoic acid from octanoyl-acyl-carrier-protein onto the lipoyl domains of lipoate-dependent enzymes. Lipoyl-ACP can also act as a substrate although octanoyl-ACP is likely to be the physiological substrate. The chain is Octanoyltransferase from Pseudomonas aeruginosa (strain UCBPP-PA14).